We begin with the raw amino-acid sequence, 418 residues long: Arginine deiminase (418 aa).

Residue Cys-406 is the Amidino-cysteine intermediate of the active site.

This sequence belongs to the arginine deiminase family.

Its subcellular location is the cytoplasm. It carries out the reaction L-arginine + H2O = L-citrulline + NH4(+). It participates in amino-acid degradation; L-arginine degradation via ADI pathway; carbamoyl phosphate from L-arginine: step 1/2. In Lentilactobacillus hilgardii (Lactobacillus hilgardii), this protein is Arginine deiminase.